Reading from the N-terminus, the 387-residue chain is MDAEKKSAHFRQISSYKPQLLVLSSIQENPSSKISEKANIKADNDAEIGVFGAEKYFSMKLDHVDSTADITKQHEKENTHDHPNANPNPNPNPHPHPHPQLTKTTSSRSKTSRHGTPSVRSESSCNSQTFLMRINNHNENKQRKMNDTSISFGGFRCYGPCSGVKTVHTDPKNSCKSRNSDRDFVAYDARKHNDKPRLHFEAKKADFHAQEKISLPIQRSDIAMNLERKLSLLTWDAIPNQLSTKNNNHNNNGNNSSMSSNTQEEETASVASSDLFEIENITSSVYEPSEASIGWSVVTGSMADQSVISDFDMMKRVTRNGPVVKTKPVIGEKVRSAGFLSGCKSHKAVSVVDSSRKVKETAKVDHHEMSHQKKFKTEIRIQDLSFL.

3 disordered regions span residues 1-21, 74-128, and 242-271; these read MDAE…PQLL, HEKE…CNSQ, and LSTK…ASVA. The span at 12-21 shows a compositional bias: polar residues; that stretch reads QISSYKPQLL. Basic and acidic residues predominate over residues 74–83; it reads HEKENTHDHP. Positions 114–128 are enriched in polar residues; it reads HGTPSVRSESSCNSQ. Residues 242–261 show a composition bias toward low complexity; the sequence is LSTKNNNHNNNGNNSSMSSN.

This sequence belongs to the PKS family.

In terms of biological role, probably involved in the phytochrome signaling pathway. The chain is Protein PHYTOCHROME KINASE SUBSTRATE 3 (PKS3) from Arabidopsis thaliana (Mouse-ear cress).